The following is a 265-amino-acid chain: MACVASSTTLISSPSSRVFPAKSSLSSPSVSFLRTLSSPSASASLRSGFARRSSLSSTSRRSFAVKAQADDLPLVGNKAPDFEAEAVFDQEFIKVKLSDYIGKKYVILFFYPLDFTFVCPTEITAFSDRHSEFEKLNTEVLGVSVDSVFSHLAWVQTDRKSGGLGDLNYPLISDVTKSISKSFGVLIHDQGIALRGLFIIDKEGVIQHSTINNLGIGRSVDETMRTLQALQYTGNPDEVCPAGWKPGEKSMKPDPKLSKEYFSAI.

A chloroplast-targeting transit peptide spans 1-65 (MACVASSTTL…SSTSRRSFAV (65 aa)). The region spanning 73 to 232 (PLVGNKAPDF…TMRTLQALQY (160 aa)) is the Thioredoxin domain. Residue C119 is the Cysteine sulfenic acid (-SOH) intermediate of the active site.

This sequence belongs to the peroxiredoxin family. AhpC/Prx1 subfamily. Homodimer; disulfide-linked, upon oxidation.

The protein localises to the plastid. It localises to the chloroplast. The enzyme catalyses a hydroperoxide + [thioredoxin]-dithiol = an alcohol + [thioredoxin]-disulfide + H2O. Functionally, thiol-specific peroxidase that catalyzes the reduction of hydrogen peroxide and organic hydroperoxides to water and alcohols, respectively. Plays a role in cell protection against oxidative stress by detoxifying peroxides. May be an antioxidant enzyme particularly in the developing shoot and photosynthesizing leaf. The protein is 2-Cys peroxiredoxin BAS1, chloroplastic (BAS1) of Spinacia oleracea (Spinach).